Consider the following 117-residue polypeptide: Holo-[acyl-carrier-protein] synthase (117 aa).

Asp8 and Glu55 together coordinate Mg(2+).

It belongs to the P-Pant transferase superfamily. AcpS family. The cofactor is Mg(2+).

Its subcellular location is the cytoplasm. The enzyme catalyses apo-[ACP] + CoA = holo-[ACP] + adenosine 3',5'-bisphosphate + H(+). Functionally, transfers the 4'-phosphopantetheine moiety from coenzyme A to a Ser of acyl-carrier-protein. This chain is Holo-[acyl-carrier-protein] synthase, found in Finegoldia magna (strain ATCC 29328 / DSM 20472 / WAL 2508) (Peptostreptococcus magnus).